The chain runs to 148 residues: MNLYFFTFTGNSRKIAEMVADELAVELREIKSLRLPYIAWLLLSFVPCMAVKIDVQPPTGKEIILCFPKWTFNCPPVTAFLKKFAKGREIRMIICYGGFDERRYAEFYKSFALKCGAKKADYLLVKRRELRENPEKVRDNIKKWLKIS.

This is an uncharacterized protein from Archaeoglobus fulgidus (strain ATCC 49558 / DSM 4304 / JCM 9628 / NBRC 100126 / VC-16).